A 274-amino-acid polypeptide reads, in one-letter code: N-acetylmuramic acid 6-phosphate etherase (274 aa).

The 164-residue stretch at 52-215 (IVPRMEQGGR…STSIMIRLGR (164 aa)) folds into the SIS domain. The active-site Proton donor is the Glu80. Glu111 is an active-site residue.

This sequence belongs to the GCKR-like family. MurNAc-6-P etherase subfamily. As to quaternary structure, homodimer.

The catalysed reaction is N-acetyl-D-muramate 6-phosphate + H2O = N-acetyl-D-glucosamine 6-phosphate + (R)-lactate. It functions in the pathway amino-sugar metabolism; N-acetylmuramate degradation. In terms of biological role, specifically catalyzes the cleavage of the D-lactyl ether substituent of MurNAc 6-phosphate, producing GlcNAc 6-phosphate and D-lactate. The polypeptide is N-acetylmuramic acid 6-phosphate etherase (Porphyromonas gingivalis (strain ATCC 33277 / DSM 20709 / CIP 103683 / JCM 12257 / NCTC 11834 / 2561)).